The chain runs to 565 residues: MRWFLVLLLVALVSVEASRRSRLFKKLYQKASNYDAAPSNVQTVWYKNMKLDHFTWGDTRTFDMRVMWNNTFYKPGGPIFFYTGNEGGLESFVTATGMMFDLAPMFNASIIFAEHRFYGQTQPFGNQSYASLANVGYLTSEQALADYAELLTELKRDNNQFKMTFPAATQVISFGGSYGGMLSAWFRQKYPHIVKGAWAGSAPLIYMNGGGVDPGAFDHITSRTYIDNGCNRFILANAWNATLNLSSTDAGRQWLNNNTVFKLDPRTKIRNQTDGWNLNAYLREAIEYMAMVDYPYPTGFLEPLPAWPVTVACGYMNANGTSFSDKDLVKAVANAANIYYNYNRDPNFTYCIDFSICGDQGTGGLGGDELGWPWQECSEIIMAMCASGGSNDVFWNECGKDIYQTLQQGCVSIFKSMGWTPKNWNIDAVKTLYGYDLSGSSNLILTQGHLDPWSGGGYKVDQNNAARGIYVLEIPGSAHHLDLRQPNTCDPNTVTNARFQIIQILKCWVDPNCNTIPTISPLPSISIPNGDCKDVVGGYPWGQTTGATVSNSFILAILASLYAMF.

Positions Met1 to Ala17 are cleaved as a signal peptide. N-linked (GlcNAc...) asparagine glycosylation is found at Asn69, Asn107, and Asn126. The Charge relay system role is filled by Ser177. 6 N-linked (GlcNAc...) asparagine glycosylation sites follow: Asn240, Asn244, Asn257, Asn271, Asn319, and Asn347. Residues Asp451 and His479 each act as charge relay system in the active site.

It belongs to the peptidase S28 family.

The sequence is that of Putative serine protease pcp-1 (pcp-1) from Caenorhabditis elegans.